Here is a 291-residue protein sequence, read N- to C-terminus: ATP synthase gamma chain (291 aa).

Belongs to the ATPase gamma chain family. F-type ATPases have 2 components, CF(1) - the catalytic core - and CF(0) - the membrane proton channel. CF(1) has five subunits: alpha(3), beta(3), gamma(1), delta(1), epsilon(1). CF(0) has three main subunits: a, b and c.

The protein resides in the cell membrane. Produces ATP from ADP in the presence of a proton gradient across the membrane. The gamma chain is believed to be important in regulating ATPase activity and the flow of protons through the CF(0) complex. In Streptococcus equi subsp. equi (strain 4047), this protein is ATP synthase gamma chain.